Consider the following 161-residue polypeptide: MSSGHFFQGHWCDVFKCTMRCLSCTHTLSLVLCVLALTPATLEAGPETLCGAELVDTLQFVCGDRGFYFSKPTGYGPSSRRSHNRGIVDECCFQSCELRRLEMYCAPVKPGKTPRSVRAQRHTDSPRTAKKPLPGQSHSSYKEVHQKNSSRGNTGGRNYRI.

The segment at 45–73 (GPETLCGAELVDTLQFVCGDRGFYFSKPT) is b. Disulfide bonds link C50–C92, C62–C105, and C91–C96. Residues 74 to 85 (GYGPSSRRSHNR) form a c region. The segment at 86–106 (GIVDECCFQSCELRRLEMYCA) is a. Residues 107-114 (PVKPGKTP) form a d region. A disordered region spans residues 111 to 161 (GKTPRSVRAQRHTDSPRTAKKPLPGQSHSSYKEVHQKNSSRGNTGGRNYRI). Positions 115-161 (RSVRAQRHTDSPRTAKKPLPGQSHSSYKEVHQKNSSRGNTGGRNYRI) are cleaved as a propeptide — e peptide.

This sequence belongs to the insulin family.

Its subcellular location is the secreted. Its function is as follows. The insulin-like growth factors, isolated from plasma, are structurally and functionally related to insulin but have a much higher growth-promoting activity. Acts as a ligand for IGF1R. Binds to the alpha subunit of IGF1R, leading to the activation of the intrinsic tyrosine kinase activity which autophosphorylates tyrosine residues in the beta subunit thus initiatiating a cascade of down-stream signaling events leading to activation of the PI3K-AKT/PKB and the Ras-MAPK pathways. Binds to integrins. Its binding to integrins and subsequent ternary complex formation with integrins and IGFR1 are essential for IGF1 signaling. This is Insulin-like growth factor 1, juvenile form from Cyprinus carpio (Common carp).